Consider the following 111-residue polypeptide: Toxin 3FTx-Tri2 (111 aa).

A signal peptide spans 1 to 19 (MKTLLLALVVLAFVCLGSA). A propeptide spanning residues 20-34 (DQVGLGKEQIDRGRR) is cleaved from the precursor. Glutamine 35 bears the Pyrrolidone carboxylic acid mark. Disulfide bonds link cysteine 44–cysteine 68, cysteine 47–cysteine 55, cysteine 61–cysteine 87, cysteine 91–cysteine 102, and cysteine 103–cysteine 108.

The protein belongs to the three-finger toxin family. Ancestral subfamily. Boigatoxin sub-subfamily. Expressed by the venom gland.

The protein resides in the secreted. Its function is as follows. Potent postsynaptic neurotoxin. Displays readily reversible competitive antagonism at the nicotinic acetylcholine receptor (nAChR). The sequence is that of Toxin 3FTx-Tri2 from Trimorphodon biscutatus (Western lyre snake).